A 253-amino-acid polypeptide reads, in one-letter code: 3-dehydroquinate dehydratase (253 aa).

3-dehydroquinate contacts are provided by residues glutamate 46–arginine 48 and arginine 82. The Proton donor/acceptor role is filled by histidine 143. Lysine 170 acts as the Schiff-base intermediate with substrate in catalysis. 3-dehydroquinate contacts are provided by arginine 213, serine 232, and glutamine 236.

It belongs to the type-I 3-dehydroquinase family. In terms of assembly, homodimer.

The catalysed reaction is 3-dehydroquinate = 3-dehydroshikimate + H2O. It functions in the pathway metabolic intermediate biosynthesis; chorismate biosynthesis; chorismate from D-erythrose 4-phosphate and phosphoenolpyruvate: step 3/7. With respect to regulation, inhibited by flavonoids such as datiscetin, naringenin, marein and phloretin. Functionally, involved in the third step of the chorismate pathway, which leads to the biosynthesis of aromatic amino acids (AroAA). Catalyzes the cis-dehydration of 3-dehydroquinate (DHQ) and introduces the first double bond of the aromatic ring to yield 3-dehydroshikimate. The reaction involves the formation of an imine intermediate between the keto group of 3-dehydroquinate and the epsilon-amino group of Lys-170 at the active site. The chain is 3-dehydroquinate dehydratase from Enterococcus faecalis (strain ATCC 700802 / V583).